A 187-amino-acid chain; its full sequence is Orotate phosphoribosyltransferase (187 aa).

Residues Arg-99, Lys-100, Lys-103, His-105, and 125 to 133 (DDVITTGGS) contribute to the 5-phospho-alpha-D-ribose 1-diphosphate site. Residues Thr-129 and Arg-157 each coordinate orotate.

Belongs to the purine/pyrimidine phosphoribosyltransferase family. PyrE subfamily. As to quaternary structure, homodimer. Requires Mg(2+) as cofactor.

It catalyses the reaction orotidine 5'-phosphate + diphosphate = orotate + 5-phospho-alpha-D-ribose 1-diphosphate. Its pathway is pyrimidine metabolism; UMP biosynthesis via de novo pathway; UMP from orotate: step 1/2. Functionally, catalyzes the transfer of a ribosyl phosphate group from 5-phosphoribose 1-diphosphate to orotate, leading to the formation of orotidine monophosphate (OMP). This is Orotate phosphoribosyltransferase from Leptospira borgpetersenii serovar Hardjo-bovis (strain JB197).